The following is a 123-amino-acid chain: Small ribosomal subunit protein uS12 (123 aa).

D89 carries the post-translational modification 3-methylthioaspartic acid. The segment at 101-123 is disordered; it reads SLDTAGVKDRKQSRSKYGAKRPK. Over residues 113–123 the composition is skewed to basic residues; it reads SRSKYGAKRPK.

This sequence belongs to the universal ribosomal protein uS12 family. Part of the 30S ribosomal subunit. Contacts proteins S8 and S17. May interact with IF1 in the 30S initiation complex.

In terms of biological role, with S4 and S5 plays an important role in translational accuracy. Functionally, interacts with and stabilizes bases of the 16S rRNA that are involved in tRNA selection in the A site and with the mRNA backbone. Located at the interface of the 30S and 50S subunits, it traverses the body of the 30S subunit contacting proteins on the other side and probably holding the rRNA structure together. The combined cluster of proteins S8, S12 and S17 appears to hold together the shoulder and platform of the 30S subunit. The sequence is that of Small ribosomal subunit protein uS12 from Laribacter hongkongensis (strain HLHK9).